We begin with the raw amino-acid sequence, 257 residues long: Imidazole glycerol phosphate synthase subunit HisF (257 aa).

Catalysis depends on residues D12 and D131.

This sequence belongs to the HisA/HisF family. Heterodimer of HisH and HisF.

Its subcellular location is the cytoplasm. The catalysed reaction is 5-[(5-phospho-1-deoxy-D-ribulos-1-ylimino)methylamino]-1-(5-phospho-beta-D-ribosyl)imidazole-4-carboxamide + L-glutamine = D-erythro-1-(imidazol-4-yl)glycerol 3-phosphate + 5-amino-1-(5-phospho-beta-D-ribosyl)imidazole-4-carboxamide + L-glutamate + H(+). It functions in the pathway amino-acid biosynthesis; L-histidine biosynthesis; L-histidine from 5-phospho-alpha-D-ribose 1-diphosphate: step 5/9. Its function is as follows. IGPS catalyzes the conversion of PRFAR and glutamine to IGP, AICAR and glutamate. The HisF subunit catalyzes the cyclization activity that produces IGP and AICAR from PRFAR using the ammonia provided by the HisH subunit. This is Imidazole glycerol phosphate synthase subunit HisF from Burkholderia lata (strain ATCC 17760 / DSM 23089 / LMG 22485 / NCIMB 9086 / R18194 / 383).